The following is a 36-amino-acid chain: Photosystem II reaction center protein M (36 aa).

Residues 5 to 25 (ILGVIATALFIIIPTSFLLIL) form a helical membrane-spanning segment.

It belongs to the PsbM family. As to quaternary structure, PSII is composed of 1 copy each of membrane proteins PsbA, PsbB, PsbC, PsbD, PsbE, PsbF, PsbH, PsbI, PsbJ, PsbK, PsbL, PsbM, PsbT, PsbX, PsbY, PsbZ, Psb30/Ycf12, at least 3 peripheral proteins of the oxygen-evolving complex and a large number of cofactors. It forms dimeric complexes.

Its subcellular location is the plastid. The protein localises to the chloroplast thylakoid membrane. In terms of biological role, one of the components of the core complex of photosystem II (PSII). PSII is a light-driven water:plastoquinone oxidoreductase that uses light energy to abstract electrons from H(2)O, generating O(2) and a proton gradient subsequently used for ATP formation. It consists of a core antenna complex that captures photons, and an electron transfer chain that converts photonic excitation into a charge separation. This subunit is found at the monomer-monomer interface. This is Photosystem II reaction center protein M from Chlorella vulgaris (Green alga).